The chain runs to 497 residues: Dihydrolipoyl dehydrogenase (497 aa).

FAD is bound by residues 60-69 (EKEPSLGGTC), Lys-78, Gly-142, and 170-172 (TGS). Cys-69 and Cys-74 are oxidised to a cystine. Residues 207–214 (GAGVIGLE), Glu-230, Val-264, and Gly-302 each bind NAD(+). FAD contacts are provided by residues Asp-343 and 349–352 (MLAH). Residue His-475 is the Proton acceptor of the active site.

This sequence belongs to the class-I pyridine nucleotide-disulfide oxidoreductase family. In terms of assembly, homodimer. It depends on FAD as a cofactor.

Its subcellular location is the cytoplasm. It carries out the reaction N(6)-[(R)-dihydrolipoyl]-L-lysyl-[protein] + NAD(+) = N(6)-[(R)-lipoyl]-L-lysyl-[protein] + NADH + H(+). The polypeptide is Dihydrolipoyl dehydrogenase (Manduca sexta (Tobacco hawkmoth)).